The sequence spans 377 residues: Glutamate 5-kinase (377 aa).

Lysine 20 is an ATP binding site. Serine 60, aspartate 147, and asparagine 159 together coordinate substrate. An ATP-binding site is contributed by 179–180; sequence TD. A PUA domain is found at 285-363; that stretch reads AGRLVIDDGA…DKVYQVLGEA (79 aa).

This sequence belongs to the glutamate 5-kinase family.

The protein localises to the cytoplasm. It catalyses the reaction L-glutamate + ATP = L-glutamyl 5-phosphate + ADP. Its pathway is amino-acid biosynthesis; L-proline biosynthesis; L-glutamate 5-semialdehyde from L-glutamate: step 1/2. Catalyzes the transfer of a phosphate group to glutamate to form L-glutamate 5-phosphate. This Acinetobacter baumannii (strain SDF) protein is Glutamate 5-kinase.